The following is a 640-amino-acid chain: Threonine--tRNA ligase (640 aa).

The 61-residue stretch at 1–61 (MPIITLPNGD…TEDSTLQIIT (61 aa)) folds into the TGS domain. The segment at 242 to 533 (DHRKIGKALD…LIEHYAGFMP (292 aa)) is catalytic. Zn(2+) contacts are provided by cysteine 333, histidine 384, and histidine 510.

The protein belongs to the class-II aminoacyl-tRNA synthetase family. In terms of assembly, homodimer. Zn(2+) is required as a cofactor.

It localises to the cytoplasm. It catalyses the reaction tRNA(Thr) + L-threonine + ATP = L-threonyl-tRNA(Thr) + AMP + diphosphate + H(+). Catalyzes the attachment of threonine to tRNA(Thr) in a two-step reaction: L-threonine is first activated by ATP to form Thr-AMP and then transferred to the acceptor end of tRNA(Thr). Also edits incorrectly charged L-seryl-tRNA(Thr). The protein is Threonine--tRNA ligase of Acinetobacter baumannii (strain AB0057).